A 158-amino-acid chain; its full sequence is Transcription elongation factor GreA (158 aa).

Residues 2 to 70 (ENQKQYPMTQ…IEQDIQRIEH (69 aa)) are a coiled coil.

It belongs to the GreA/GreB family.

Its function is as follows. Necessary for efficient RNA polymerase transcription elongation past template-encoded arresting sites. The arresting sites in DNA have the property of trapping a certain fraction of elongating RNA polymerases that pass through, resulting in locked ternary complexes. Cleavage of the nascent transcript by cleavage factors such as GreA or GreB allows the resumption of elongation from the new 3'terminus. GreA releases sequences of 2 to 3 nucleotides. The chain is Transcription elongation factor GreA from Staphylococcus epidermidis (strain ATCC 35984 / DSM 28319 / BCRC 17069 / CCUG 31568 / BM 3577 / RP62A).